A 302-amino-acid polypeptide reads, in one-letter code: Probable alpha-L-glutamate ligase (302 aa).

Residues 104–287 (MQLLSREGVG…VAGMIIEFIE (184 aa)) form the ATP-grasp domain. Residues lysine 141, 178 to 179 (EF), aspartate 187, and 211 to 213 (RSN) each bind ATP. Mg(2+) contacts are provided by aspartate 248, glutamate 260, and asparagine 262. Residues aspartate 248, glutamate 260, and asparagine 262 each contribute to the Mn(2+) site.

This sequence belongs to the RimK family. Requires Mg(2+) as cofactor. Mn(2+) serves as cofactor.

The chain is Probable alpha-L-glutamate ligase from Halorhodospira halophila (strain DSM 244 / SL1) (Ectothiorhodospira halophila (strain DSM 244 / SL1)).